Here is a 1203-residue protein sequence, read N- to C-terminus: Transmembrane channel-like protein 2 (1203 aa).

Disordered stretches follow at residues 1–39 and 64–90; these read MPKSGAHQPLVRHDTDDGGETGQSVKSLADVSEEEIDSR and PHTRLGNPNFDDDDDEFDEEDDKEASK. The span at 73–86 shows a compositional bias: acidic residues; sequence FDDDDDEFDEEDDK. Residues 191-213 form a helical membrane-spanning segment; that stretch reads VLGVNITITFIMCMFVVIPEWLA. The N-linked (GlcNAc...) asparagine glycan is linked to N225. Helical transmembrane passes span 276 to 298, 369 to 391, 406 to 428, 441 to 463, 665 to 687, and 714 to 736; these read YRVPVAYFFCNIFILGFSLFIIL, FVARVLTNLFICAMYVFSIWAIM, ATAITISLITLVFPNIFDLLGKI, LGRVLVLYILNYYTLIYSLMLQL, MIWLGLFFVPLLPMLNNIKLIIL, and FFFALLILFLFLCTLPVGFVIAS. A glycan (N-linked (GlcNAc...) asparagine) is linked at N748. A helical transmembrane segment spans residues 780–802; that stretch reads IIIPVLVLLSLVIYFLIAMVTGL. 4 disordered regions span residues 826–908, 927–1039, 1059–1087, and 1112–1203; these read ELAG…SLPP, KYGR…IEKQ, ATVENSSQDPTRPPSTDDSLGDPALHEPL, and NDET…SDND. Over residues 865–874 the composition is skewed to polar residues; it reads NRSTAKSVSG. Residues 898–908 show a composition bias toward low complexity; it reads DSESTTSSLPP. Basic and acidic residues predominate over residues 927–945; that stretch reads KYGRHDDIEMEEGGGRLRE. Low complexity-rich tracts occupy residues 973 to 997 and 1022 to 1035; these read QSFDQNSQSASASSSKSTTTAPSNS and SASSSSSSHQPSSS. Over residues 1061-1076 the composition is skewed to polar residues; the sequence is VENSSQDPTRPPSTDD. Basic and acidic residues-rich tracts occupy residues 1133-1147 and 1172-1203; these read SPRELKRLKREKDQQ and PPSEKNDSDSSNRKYEMRVEKSPKKPKKSDND.

Belongs to the TMC family.

It is found in the membrane. Probable ion channel. The sequence is that of Transmembrane channel-like protein 2 (tmc-2) from Caenorhabditis elegans.